We begin with the raw amino-acid sequence, 614 residues long: V-type proton ATPase catalytic subunit A (614 aa).

247 to 254 (GAFGCGKT) contacts ATP.

It belongs to the ATPase alpha/beta chains family. As to quaternary structure, V-ATPase is a heteromultimeric enzyme made up of two complexes: the ATP-hydrolytic V1 complex and the proton translocation V0 complex. The V1 complex consists of three catalytic AB heterodimers that form a heterohexamer, three peripheral stalks each consisting of EG heterodimers, one central rotor including subunits D and F, and the regulatory subunits C and H. The proton translocation complex V0 consists of the proton transport subunit a, a ring of proteolipid subunits c9c'', rotary subunit d, subunits e and f, and the accessory subunits VhaAC45 and ATP6AP2.

The catalysed reaction is ATP + H2O + 4 H(+)(in) = ADP + phosphate + 5 H(+)(out). With respect to regulation, ATP hydrolysis occurs at the interface between the nucleotide-binding domains of subunits A and B. ATP hydrolysis triggers a conformational change in the subunits D and F, which induces a shift of subunit d. The c-ring is subsequently rotated and results in a continuous proton translocation across the membrane. Its function is as follows. Catalytic subunit of the V1 complex of vacuolar(H+)-ATPase (V-ATPase), a multisubunit enzyme composed of a peripheral complex (V1) that hydrolyzes ATP and a membrane integral complex (V0) that translocates protons. V-ATPase is responsible for acidifying and maintaining the pH of intracellular compartments and in some cell types, is targeted to the plasma membrane, where it is responsible for acidifying the extracellular environment. The protein is V-type proton ATPase catalytic subunit A of Anopheles gambiae (African malaria mosquito).